We begin with the raw amino-acid sequence, 400 residues long: Vitamin K-dependent protein Z (400 aa).

The N-terminal stretch at 1–23 (MAGCVPLLQGLVLVLALHRVEPS) is a signal peptide. Positions 24 to 40 (VFLPASKANDVLVRWKR) are excised as a propeptide. Positions 41–86 (AGSYLLEELFEGNLEKECYEEICVYEEAREVFENEVVTDEFWRRYK) constitute a Gla domain. 13 positions are modified to 4-carboxyglutamate: Glu47, Glu48, Glu51, Glu55, Glu57, Glu60, Glu61, Glu66, Glu67, Glu70, Glu73, Glu75, and Glu80. A disulfide bridge connects residues Cys58 and Cys63. EGF-like domains follow at residues 87-123 (GGSP…SNCE) and 125-166 (AKNE…KQCV). 7 disulfides stabilise this stretch: Cys91–Cys102, Cys96–Cys111, Cys113–Cys122, Cys129–Cys141, Cys137–Cys150, Cys152–Cys165, and Cys203–Cys219. Residue Ser93 is glycosylated (O-linked (Glc...) serine). An N-linked (GlcNAc...) asparagine glycan is attached at Asn99. (3R)-3-hydroxyaspartate is present on Asp104. Positions 175-400 (VLTSEKRAPD…YSLWFKQIMN (226 aa)) constitute a Peptidase S1 domain. N-linked (GlcNAc...) asparagine glycosylation is found at Asn225, Asn233, Asn306, and Asn332. Cys327 and Cys341 are joined by a disulfide.

The protein belongs to the peptidase S1 family. Interacts with SERPINA10. In terms of processing, the iron and 2-oxoglutarate dependent 3-hydroxylation of aspartate and asparagine is (R) stereospecific within EGF domains. Plasma.

The protein localises to the secreted. In terms of biological role, appears to assist hemostasis by binding thrombin and promoting its association with phospholipid vesicles. Inhibits activity of the coagulation protease factor Xa in the presence of SERPINA10, calcium and phospholipids. The polypeptide is Vitamin K-dependent protein Z (PROZ) (Homo sapiens (Human)).